The following is a 57-amino-acid chain: Sec-independent protein translocase protein TatA (57 aa).

Residues 1 to 21 (MGISVWQLLIILLIVVMLFGT) form a helical membrane-spanning segment. Residues 37–57 (GFRKSVSDGETTTQAEASSRS) are disordered. The span at 44–57 (DGETTTQAEASSRS) shows a compositional bias: polar residues.

This sequence belongs to the TatA/E family. In terms of assembly, the Tat system comprises two distinct complexes: a TatABC complex, containing multiple copies of TatA, TatB and TatC subunits, and a separate TatA complex, containing only TatA subunits. Substrates initially bind to the TatABC complex, which probably triggers association of the separate TatA complex to form the active translocon.

The protein resides in the cell inner membrane. Part of the twin-arginine translocation (Tat) system that transports large folded proteins containing a characteristic twin-arginine motif in their signal peptide across membranes. TatA could form the protein-conducting channel of the Tat system. In Stutzerimonas stutzeri (Pseudomonas stutzeri), this protein is Sec-independent protein translocase protein TatA.